The following is a 309-amino-acid chain: Methionyl-tRNA formyltransferase (309 aa).

(6S)-5,6,7,8-tetrahydrofolate is bound at residue 109-112 (SLLP).

This sequence belongs to the Fmt family.

The catalysed reaction is L-methionyl-tRNA(fMet) + (6R)-10-formyltetrahydrofolate = N-formyl-L-methionyl-tRNA(fMet) + (6S)-5,6,7,8-tetrahydrofolate + H(+). Functionally, attaches a formyl group to the free amino group of methionyl-tRNA(fMet). The formyl group appears to play a dual role in the initiator identity of N-formylmethionyl-tRNA by promoting its recognition by IF2 and preventing the misappropriation of this tRNA by the elongation apparatus. The protein is Methionyl-tRNA formyltransferase of Clostridium perfringens (strain SM101 / Type A).